The following is an 805-amino-acid chain: Phenylalanine--tRNA ligase beta subunit (805 aa).

The region spanning 39-154 (SEGLKKVVVG…DDATPGDPVF (116 aa)) is the tRNA-binding domain. In terms of domain architecture, B5 spans 410–485 (VQPTTVTIDL…RLYGYDNLPA (76 aa)). Aspartate 463, aspartate 469, glutamate 472, and glutamate 473 together coordinate Mg(2+). An FDX-ACB domain is found at 712-805 (SKFPSITRDV…LTDELGAEIR (94 aa)).

It belongs to the phenylalanyl-tRNA synthetase beta subunit family. Type 1 subfamily. As to quaternary structure, tetramer of two alpha and two beta subunits. It depends on Mg(2+) as a cofactor.

It is found in the cytoplasm. It catalyses the reaction tRNA(Phe) + L-phenylalanine + ATP = L-phenylalanyl-tRNA(Phe) + AMP + diphosphate + H(+). The chain is Phenylalanine--tRNA ligase beta subunit from Lactiplantibacillus plantarum (strain ATCC BAA-793 / NCIMB 8826 / WCFS1) (Lactobacillus plantarum).